We begin with the raw amino-acid sequence, 590 residues long: MKFSKPKFSMPKWRLTKEDFTPKGMWRNFKNFIVIEAKPGTTLAERFLTNEDLYPVPKSQRVWGPWNYVAFWLADSVNVNTWMIAGTAVESGLSWWEAWITVWVGYTIAAFILTIAGRAGAVYHISFPVLSRSSFGIWGSLWPILNRAVMACVWYGVQAWIGGECVTLMIRSIWPSFSHIPNTMAKSGTETYQWVGFFIFWLISNVAIWFPVYQIRHLFTAKSFLAPPAAIAFLIWALVKAHGAGDAIHAKTQLSTWNHGWAVTAGIISCLDNFATLIVNNPDFTRFATTPNAPIFPQLITIPMGFGITTLIGVLVGSASKSIYGENIWNPLDLLKSFLDHSNHHGVRAGVFFISTGLCLAQLGVNIAANTVSAGNDTSALCPMFINIRRGGYIASIIGICMCPWNLLSSSNSFANSLSAYAVFLSSFAGILIADYFVIRKGYLKVDALYTINPNEPYWFTYGINLRAFASYICGLLINVVGLAGAVGDKVPKAALTMNNIAYLLGIVTSFLSHLIICKIFPVTACGEKFLDERPEETDNYLLTLESTEDTISSYEETEGIPVKKVSYDSKEKSDDGKSGGIDIKESSVF.

At 1–68 (MKFSKPKFSM…SQRVWGPWNY (68 aa)) the chain is on the cytoplasmic side. A helical transmembrane segment spans residues 69–89 (VAFWLADSVNVNTWMIAGTAV). Residues 90–94 (ESGLS) lie on the Extracellular side of the membrane. A helical membrane pass occupies residues 95–115 (WWEAWITVWVGYTIAAFILTI). At 116–124 (AGRAGAVYH) the chain is on the cytoplasmic side. The helical transmembrane segment at 125-145 (ISFPVLSRSSFGIWGSLWPIL) threads the bilayer. The Extracellular portion of the chain corresponds to 146-149 (NRAV). The chain crosses the membrane as a helical span at residues 150 to 170 (MACVWYGVQAWIGGECVTLMI). At 171–194 (RSIWPSFSHIPNTMAKSGTETYQW) the chain is on the cytoplasmic side. Residues 195–215 (VGFFIFWLISNVAIWFPVYQI) traverse the membrane as a helical segment. Residues 216 to 218 (RHL) lie on the Extracellular side of the membrane. Residues 219 to 239 (FTAKSFLAPPAAIAFLIWALV) traverse the membrane as a helical segment. At 240 to 258 (KAHGAGDAIHAKTQLSTWN) the chain is on the cytoplasmic side. A helical membrane pass occupies residues 259-279 (HGWAVTAGIISCLDNFATLIV). Residues 280-298 (NNPDFTRFATTPNAPIFPQ) are Extracellular-facing. A helical membrane pass occupies residues 299–319 (LITIPMGFGITTLIGVLVGSA). Residues 320-390 (SKSIYGENIW…LCPMFINIRR (71 aa)) are Cytoplasmic-facing. Residues 391-411 (GGYIASIIGICMCPWNLLSSS) form a helical membrane-spanning segment. Over 412–418 (NSFANSL) the chain is Extracellular. A helical transmembrane segment spans residues 419–439 (SAYAVFLSSFAGILIADYFVI). The Cytoplasmic segment spans residues 440–467 (RKGYLKVDALYTINPNEPYWFTYGINLR). Residues 468–488 (AFASYICGLLINVVGLAGAVG) traverse the membrane as a helical segment. Over 489-500 (DKVPKAALTMNN) the chain is Extracellular. Residues 501 to 521 (IAYLLGIVTSFLSHLIICKIF) traverse the membrane as a helical segment. The Cytoplasmic portion of the chain corresponds to 522–590 (PVTACGEKFL…GIDIKESSVF (69 aa)). Residues 566–590 (VSYDSKEKSDDGKSGGIDIKESSVF) are disordered.

It belongs to the purine-cytosine permease (2.A.39) family.

The protein resides in the cytoplasm. It is found in the nucleus. It localises to the membrane. This is an uncharacterized protein from Schizosaccharomyces pombe (strain 972 / ATCC 24843) (Fission yeast).